The chain runs to 360 residues: Snurportin-1 (360 aa).

Methionine 1 bears the N-acetylmethionine mark. A disordered region spans residues 1–42; sequence MEELSQALASSFSVSQDLNSTAAPHPRLSQYKSKYSSLEQSE. Positions 1 to 65 are necessary for interaction with KPNB1 and m3G-cap U1 and U5 snRNP import receptor activity; it reads MEELSQALAS…LDYVNHARRL (65 aa). Residues 1 to 159 form a necessary for interaction with XPO1 region; that stretch reads MEELSQALAS…NRFSSLLPGG (159 aa). Positions 7 to 22 are enriched in polar residues; it reads ALASSFSVSQDLNSTA. Residues 11 to 73 form the IBB domain; it reads SFSVSQDLNS…RLAEDDWTGM (63 aa). At serine 75 the chain carries Phosphoserine. The segment at 127–129 is interaction with m3G-cap structure; the sequence is GKR. Residues 208-328 are necessary for binding to the m3G-cap structure; sequence MHSKLPEEEG…GMKEKLTHKA (121 aa). Residues 339 to 360 are disordered; that stretch reads LSTPKLKGSSHSPDHPGCLMEN. Serine 350 bears the Phosphoserine mark.

This sequence belongs to the snurportin family. In terms of assembly, component of an import snRNP complex composed of KPNB1, SNUPN, SMN1 and ZNF259. Component of a nuclear export receptor complex composed of KPNB1, Ran, SNUPN and XPO1. Found in a trimeric export complex with SNUPN, Ran and XPO1. Interacts (via IBB domain) with KPNB1; the interaction is direct. Interacts with DDX20, IPO7, SMN1, SNRPB and XPO1. Interacts directly with XPO1. Its interaction with XPO1 and binding to m3G-cap U snRNPs appears to be mutually exclusive. Can form homomers.

Its subcellular location is the nucleus. The protein localises to the cytoplasm. Its function is as follows. Functions as an U snRNP-specific nuclear import adapter. Involved in the trimethylguanosine (m3G)-cap-dependent nuclear import of U snRNPs. Binds specifically to the terminal m3G-cap U snRNAs. The polypeptide is Snurportin-1 (SNUPN) (Homo sapiens (Human)).